Reading from the N-terminus, the 347-residue chain is Putative phosphoesterase 078R (347 aa).

Residues Asp52, Asn87, and His211 each contribute to the a divalent metal cation site.

It belongs to the metallophosphoesterase superfamily. IIV-6 244L family.

The sequence is that of Putative phosphoesterase 078R from Invertebrate iridescent virus 3 (IIV-3).